The following is a 106-amino-acid chain: Immunoglobulin lambda constant 7 (106 aa).

The Ig-like domain maps to 7-101; that stretch reads PSVTLFPPSS…EGSTVEKTVA (95 aa). Cysteine 28 and cysteine 87 are joined by a disulfide.

As to quaternary structure, immunoglobulins are composed of two identical heavy chains and two identical light chains; disulfide-linked.

The protein resides in the secreted. It localises to the cell membrane. Constant region of immunoglobulin light chains. Immunoglobulins, also known as antibodies, are membrane-bound or secreted glycoproteins produced by B lymphocytes. In the recognition phase of humoral immunity, the membrane-bound immunoglobulins serve as receptors which, upon binding of a specific antigen, trigger the clonal expansion and differentiation of B lymphocytes into immunoglobulins-secreting plasma cells. Secreted immunoglobulins mediate the effector phase of humoral immunity, which results in the elimination of bound antigens. The antigen binding site is formed by the variable domain of one heavy chain, together with that of its associated light chain. Thus, each immunoglobulin has two antigen binding sites with remarkable affinity for a particular antigen. The variable domains are assembled by a process called V-(D)-J rearrangement and can then be subjected to somatic hypermutations which, after exposure to antigen and selection, allow affinity maturation for a particular antigen. This is Immunoglobulin lambda constant 7 from Homo sapiens (Human).